A 464-amino-acid chain; its full sequence is NADH dehydrogenase [ubiquinone] flavoprotein 1, mitochondrial (464 aa).

The transit peptide at 1–20 (MLATRRLLGWSLPARVSVRF) directs the protein to the mitochondrion. Lys81 carries the post-translational modification N6-acetyllysine; alternate. An N6-succinyllysine; alternate modification is found at Lys81. 87-96 (GRGGAGFPTG) is a binding site for NADH. Lys104 carries the N6-acetyllysine modification. 199-247 (RGAGAYICGEETALIESIEGKQGKPRLKPPFPADVGVFGCPTTVANVET) contributes to the FMN binding site. Position 257 is an omega-N-methylarginine (Arg257). At Lys375 the chain carries N6-acetyllysine. 4 residues coordinate [4Fe-4S] cluster: Cys379, Cys382, Cys385, and Cys425.

This sequence belongs to the complex I 51 kDa subunit family. Core subunit of respiratory chain NADH dehydrogenase (Complex I) which is composed of 45 different subunits. This is a component of the flavoprotein-sulfur (FP) fragment of the enzyme. Interacts with RAB5IF. FMN serves as cofactor. Requires [4Fe-4S] cluster as cofactor.

The protein localises to the mitochondrion inner membrane. The enzyme catalyses a ubiquinone + NADH + 5 H(+)(in) = a ubiquinol + NAD(+) + 4 H(+)(out). In terms of biological role, core subunit of the mitochondrial membrane respiratory chain NADH dehydrogenase (Complex I) which catalyzes electron transfer from NADH through the respiratory chain, using ubiquinone as an electron acceptor. Part of the peripheral arm of the enzyme, where the electrons from NADH are accepted by flavin mononucleotide (FMN) and then passed along a chain of iron-sulfur clusters by electron tunnelling to the final acceptor ubiquinone. Contains FMN, which is the initial electron acceptor as well as one iron-sulfur cluster. This chain is NADH dehydrogenase [ubiquinone] flavoprotein 1, mitochondrial, found in Pan troglodytes (Chimpanzee).